Consider the following 667-residue polypeptide: Long-chain fatty acid transport protein 3 (667 aa).

Residues 3–23 (ALLLLLPLLLLLPLLLKLDVW) traverse the membrane as a helical segment. Residues 114–144 (TGGRRGSGRGSTEEGARVAPPAGDAAARGTT) form a disordered region. Residues 130–144 (RVAPPAGDAAARGTT) are compositionally biased toward low complexity. ATP-binding positions include 272 to 276 (TSGTT), His315, Thr412, Asp512, Arg527, and Lys619.

This sequence belongs to the ATP-dependent AMP-binding enzyme family. Expressed at high levels in adrenal gland, testis and ovary. Expressed at lower levels in adult brain. Found in adrenal cortical cells, spermatocytes and interstitial cells of the testis, theca cells of the ovary, cerebral cortical neurons, and cerebellar Purkinje cells (at protein level).

The protein localises to the mitochondrion membrane. The enzyme catalyses a fatty acid(in) = a fatty acid(out). It carries out the reaction a long-chain fatty acid + ATP + CoA = a long-chain fatty acyl-CoA + AMP + diphosphate. It catalyses the reaction (5Z,8Z,11Z,14Z)-eicosatetraenoate + ATP + CoA = (5Z,8Z,11Z,14Z)-eicosatetraenoyl-CoA + AMP + diphosphate. The catalysed reaction is hexadecanoate + ATP + CoA = hexadecanoyl-CoA + AMP + diphosphate. The enzyme catalyses (9Z)-octadecenoate + ATP + CoA = (9Z)-octadecenoyl-CoA + AMP + diphosphate. It carries out the reaction (9Z,12Z)-octadecadienoate + ATP + CoA = (9Z,12Z)-octadecadienoyl-CoA + AMP + diphosphate. It catalyses the reaction a very long-chain fatty acid + ATP + CoA = a very long-chain fatty acyl-CoA + AMP + diphosphate. The catalysed reaction is tetracosanoate + ATP + CoA = tetracosanoyl-CoA + AMP + diphosphate. Mainly functions as an acyl-CoA ligase catalyzing the ATP-dependent formation of fatty acyl-CoA using LCFA and very-long-chain fatty acids (VLCFA) as substrates. Can mediate the levels of long-chain fatty acids (LCFA) in the cell by facilitating their transport across membranes. This chain is Long-chain fatty acid transport protein 3 (Slc27a3), found in Mus musculus (Mouse).